The following is a 469-amino-acid chain: Keratin, type II cytoskeletal 7 (469 aa).

S2 is modified (N-acetylserine). Phosphoserine occurs at positions 2, 6, and 7. Positions 2-90 are head; that stretch reads SIHFSSPVFT…DPSLQRVRQE (89 aa). S12 carries an O-linked (GlcNAc) serine glycan. R20 carries the post-translational modification Dimethylated arginine; alternate. At R20 the chain carries Omega-N-methylarginine; alternate. Phosphoserine is present on residues S53, S71, and S83. Residues 90–126 are coil 1A; the sequence is EEREQIKTLNNKFASFIDKVRFLEQQNKLLETKWTLL. The IF rod domain occupies 91–403; sequence EREQIKTLNN…KLLEGEESRL (313 aa). T97 carries the phosphothreonine modification. Residues 127–144 form a linker 1 region; sequence QEQKSAKSSRLPDIFEAQ. A Glycyl lysine isopeptide (Lys-Gly) (interchain with G-Cter in SUMO2) cross-link involves residue K130. Residues 145–236 are coil 1B; sequence IAGLRGQLEA…TLNETELTEL (92 aa). N6-acetyllysine is present on K179. The segment at 237-260 is linker 12; that stretch reads QSQISDTSVVLSMDNSRSLDLDGI. S252 and S254 each carry phosphoserine. A coil 2 region spans residues 261 to 399; it reads IAEVKAQYEE…ATYRKLLEGE (139 aa). Residues K265 and K286 each participate in a glycyl lysine isopeptide (Lys-Gly) (interchain with G-Cter in SUMO2) cross-link. The residue at position 289 (T289) is a Phosphothreonine. Residues K296 and K331 each participate in a glycyl lysine isopeptide (Lys-Gly) (interchain with G-Cter in SUMO2) cross-link. Residues 400-469 form a tail region; sequence ESRLAGDGVG…ASASRRSARN (70 aa).

The protein belongs to the intermediate filament family. Heterotetramer of two type I and two type II keratins. Interacts with eukaryotic translation initiator factor 3 (eIF3) subunit EIF3S10. Interacts with GPER1. Arg-20 is dimethylated, probably to asymmetric dimethylarginine.

Functionally, blocks interferon-dependent interphase and stimulates DNA synthesis in cells. The sequence is that of Keratin, type II cytoskeletal 7 from Pan troglodytes (Chimpanzee).